A 132-amino-acid chain; its full sequence is Replication enhancer protein (132 aa).

It belongs to the geminiviridae replication enhancer protein family. Homooligomer. Interacts with the replication-associated protein (REP). Interacts with host proliferating cell nuclear antigen (PCNA). Interacts with host retinoblastoma-related protein 1 (RBR1), and may thereby deregulate the host cell cycle. Oligomerization and interaction with PCNA are necessary for optimal replication enhancement.

Increases viral DNA accumulation. Enhances infectivity and symptom expression. The protein is Replication enhancer protein of Abutilon (Upland cotton).